The primary structure comprises 375 residues: G-protein coupled estrogen receptor 1 (375 aa).

The residue at position 1 (M1) is an N-acetylmethionine. The Extracellular portion of the chain corresponds to 1–62 (MAATTPAQDV…QQYVIALFLS (62 aa)). Residues N32 and N44 are each glycosylated (N-linked (GlcNAc...) asparagine). The helical transmembrane segment at 63–84 (CLYTIFLFPIGFVGNILILVVN) threads the bilayer. Residues 85-96 (ISFREKMTIPDL) are Cytoplasmic-facing. The helical transmembrane segment at 97 to 120 (YFINLAAADLILVADSLIEVFNLD) threads the bilayer. Over 121–132 (EQYYDIAVLCTF) the chain is Extracellular. An intrachain disulfide couples C130 to C207. Residues 133–153 (MSLFLQINMYSSVFFLTWMSF) traverse the membrane as a helical segment. The Cytoplasmic portion of the chain corresponds to 154 to 175 (DRYLALAKAMRCGLFRTKHHAR). Residues 176–194 (LSCGLIWMASVSATLVPFT) traverse the membrane as a helical segment. Topologically, residues 195–220 (AVHLRHTEEACFCFADVREVQWLEVT) are extracellular. The chain crosses the membrane as a helical span at residues 221-236 (LGFIVPFAIIGLCYSL). The Cytoplasmic portion of the chain corresponds to 237 to 259 (IVRALIRAHRHRGLRPRRQKALR). Residues 260–280 (MIFAVVLVFFICWLPENVFIS) form a helical membrane-spanning segment. Over 281-306 (VHLLQWAQPGDTPCKQSFRHAYPLTG) the chain is Extracellular. The chain crosses the membrane as a helical span at residues 307-327 (HIVNLAAFSNSCLSPLIYSFL). The Cytoplasmic segment spans residues 328–375 (GETFRDKLRLYVAQKTSLPALNRFCHATLKAVIPDSTEQSDVKFSSAV).

The protein belongs to the G-protein coupled receptor 1 family. Homodimer. Heterodimer; heterodimerizes with other G-protein-coupled receptor (GPCRs) like CRHR1, HTR1A and PAQR8. Interacts with RAMP3; the interaction confers proper subcellular localization and function in cardioprotection. Interacts with KRT7 and KRT8. Interacts with EGFR; the interaction increases after agonist-induced stimulation in cancer-associated fibroblasts (CAF). Interacts with EGFR and ESR1. Interacts (via C-terminus tail motif) with DLG4 (via N-terminus tandem pair of PDZ domains); the interaction is direct and induces the increase of GPER1 protein levels residing at the plasma membrane surface in a estradiol-independent manner. Post-translationally, ubiquitinated; ubiquitination occurs at the plasma membrane and leads to proteasome-mediated degradation. Glycosylated. Expressed in the brain. Expressed in neurons of the hippocampus, hypothalamic paraventricular nucleus (PVN), supraoptic nucleus (SON) and the median eminence. Expressed in magnocellular neurosecretory cells (MNCs) which secrete oxytocin but not in MNCs which secrete vasopressin. Expressed in glial cells. Expressed in the nucleus ambiguous. Expressed in epithelial cells, in pachytene spermatocytes (PS) (at protein level). Expressed strongly in vascular endothelial cells and poorly in vascular smooth muscle cells (VSMC). Expressed in the brain, lung, pituitary gland, adrenal medulla, renal pelvis and ovary. Expressed in CA1 hippocampus. Expressed weakly in heart, skeletal muscle and kidney.

The protein localises to the nucleus. It localises to the cytoplasm. Its subcellular location is the perinuclear region. It is found in the cytoskeleton. The protein resides in the cytoplasmic vesicle membrane. The protein localises to the cell membrane. It localises to the basolateral cell membrane. Its subcellular location is the endoplasmic reticulum membrane. It is found in the early endosome. The protein resides in the recycling endosome. The protein localises to the golgi apparatus. It localises to the trans-Golgi network. Its subcellular location is the golgi apparatus membrane. It is found in the cell projection. The protein resides in the dendrite. The protein localises to the dendritic spine membrane. It localises to the axon. Its subcellular location is the postsynaptic density. It is found in the mitochondrion membrane. In terms of biological role, G-protein coupled estrogen receptor that binds to 17-beta-estradiol (E2) with high affinity, leading to rapid and transient activation of numerous intracellular signaling pathways. Stimulates cAMP production, calcium mobilization and tyrosine kinase Src inducing the release of heparin-bound epidermal growth factor (HB-EGF) and subsequent transactivation of the epidermal growth factor receptor (EGFR), activating downstream signaling pathways such as PI3K/Akt and ERK/MAPK. Mediates pleiotropic functions among others in the cardiovascular, endocrine, reproductive, immune and central nervous systems. Has a role in cardioprotection by reducing cardiac hypertrophy and perivascular fibrosis in a RAMP3-dependent manner. Regulates arterial blood pressure by stimulating vasodilation and reducing vascular smooth muscle and microvascular endothelial cell proliferation. Plays a role in blood glucose homeostasis contributing to the insulin secretion response by pancreatic beta cells. Triggers mitochondrial apoptosis during pachytene spermatocyte differentiation. Stimulates uterine epithelial cell proliferation. Enhances uterine contractility in response to oxytocin. Contributes to thymic atrophy by inducing apoptosis. Attenuates TNF-mediated endothelial expression of leukocyte adhesion molecules. Promotes neuritogenesis in developing hippocampal neurons. Plays a role in acute neuroprotection against NMDA-induced excitotoxic neuronal death. Increases firing activity and intracellular calcium oscillations in luteinizing hormone-releasing hormone (LHRH) neurons. Inhibits early osteoblast proliferation at growth plate during skeletal development. Inhibits mature adipocyte differentiation and lipid accumulation. Involved in the recruitment of beta-arrestin 2 ARRB2 at the plasma membrane in epithelial cells. Also functions as a receptor for aldosterone mediating rapid regulation of vascular contractibility through the PI3K/ERK signaling pathway. Involved in cancer progression regulation. Stimulates cancer-associated fibroblast (CAF) proliferation by a rapid genomic response through the EGFR/ERK transduction pathway. Associated with EGFR, may act as a transcription factor activating growth regulatory genes (c-fos, cyclin D1). Promotes integrin alpha-5/beta-1 and fibronectin (FN) matrix assembly in breast cancer cells. The sequence is that of G-protein coupled estrogen receptor 1 (Gper1) from Rattus norvegicus (Rat).